The sequence spans 144 residues: Maximins 11/H1 (144 aa).

The first 18 residues, 1–18 (MNFKYIVAVSFLIASAYA), serve as a signal peptide directing secretion. A propeptide spanning residues 19 to 43 (RSEENDEQSLSQRDVLEEESLREIR) is cleaved from the precursor. N70 carries the post-translational modification Asparagine amide. Residues 74–123 (TAEDHEVMKRLEAVMRDLDSLDYPEEASERETRGFNQEEIANLFTKKEKR) constitute a propeptide that is removed on maturation. L143 carries the post-translational modification Leucine amide.

It belongs to the bombinin family. As to expression, expressed by the skin glands.

Its subcellular location is the secreted. Functionally, maximin-11 shows antimicrobial activity against bacteria and against the fungus C.albicans. It has little hemolytic activity. In terms of biological role, maximin-H1 shows antibacterial activity against both Gram-positive and Gram-negative bacteria. It also shows antimicrobial activity against the fungus C.albicans. Shows strong hemolytic activity. The protein is Maximins 11/H1 of Bombina maxima (Giant fire-bellied toad).